The chain runs to 383 residues: Schlafen-like protein 3 (383 aa).

Residues 118–266 form an SLFN-like fold region; it reads FDYQSNFSDV…SDKVYQISSG (149 aa). Residues 354–374 form a helical membrane-spanning segment; that stretch reads LLDIQNIGWIFFGTALSFCIY.

Belongs to the Schlafen family. Component of the PUCH (precursor of 21U RNA 5'-end cleavage holoenzyme) complex; consisting of tofu-1, tofu-2 and either slfl-3 or slfl-4. Within the complex, interacts (via N-terminus) with tofu-2 (via N-terminus); the presence of tofu-1 is required for the interaction.

The protein resides in the mitochondrion membrane. Component of the trimeric PUCH (precursor of 21U RNA 5'-end cleavage holoenzyme) complex, that acts as an endoribonuclease processing the 5'-end of precursor Piwi-interacting RNAs (piRNAs). The PUCH complex consists of tofu-1, tofu-2 and either slfl-3 or slfl-4, where tofu-2 exhibits endoribonuclease activity. PUCH-mediated processing strictly requires a 7-methyl-G cap (m7 G-cap) and an uracil at position three (U3). PUCH also exhibits a strict bias for piRNA precursors with an A or G at position 1. Mature piRNA production is enhanced by the interaction of PUCH with the PETISCO complex, which is stabilizing piRNA precursors and allows their processing by PUCH. This chain is Schlafen-like protein 3, found in Caenorhabditis elegans.